The chain runs to 419 residues: Capsule polysaccharide modification protein LipB (419 aa).

The protein localises to the cell inner membrane. Functionally, involved in the phospholipid modification of the capsular polysaccharide, a strong requirement for its translocation to the cell surface. In Neisseria meningitidis serogroup A / serotype 4A (strain DSM 15465 / Z2491), this protein is Capsule polysaccharide modification protein LipB (lipB).